The primary structure comprises 330 residues: Malate dehydrogenase (330 aa).

Residue 12-18 (GAAGQIG) coordinates NAD(+). Residues Arg-93 and Arg-99 each coordinate substrate. NAD(+)-binding positions include Asn-106, Gln-113, and 130 to 132 (VGN). Substrate is bound by residues Asn-132 and Arg-163. The active-site Proton acceptor is the His-188.

It belongs to the LDH/MDH superfamily. MDH type 2 family.

It carries out the reaction (S)-malate + NAD(+) = oxaloacetate + NADH + H(+). In terms of biological role, catalyzes the reversible oxidation of malate to oxaloacetate. This is Malate dehydrogenase from Legionella pneumophila (strain Lens).